The primary structure comprises 700 residues: Pyrroloquinoline quinone transporter (700 aa).

The N-terminal stretch at 1-23 (MKIFSVRQTVLPALLVLSPVVFA) is a signal peptide. The TBDR plug domain occupies 39–157 (SELDTPAAVS…SGGVMNVTTQ (119 aa)). The next 24 membrane-spanning stretches (beta stranded) occupy residues 132–136 (NVEVL), 150–160 (GVMNVTTQTGQ), 162–171 (PPTIEASSYY), 177–186 (WRYGLKATGA), 195–204 (DVDYTVSTTR), 220–227 (LANAKLGV), 233–241 (SKLSLIFNS), 280–288 (QAGLRYERS), 295–301 (MSVMMYA), 335–344 (GIDSRWTHRG), 350–358 (VTFTTGLNY), 398–405 (DPYLQTQW), 411–419 (LSLDAGVRY), 447–456 (WLPAGSLKYA), 464–468 (YLAAG), 500–509 (TIEIGSKTRI), 511–520 (DGLLSLALFQ), 549–556 (GAELAWDQ), 563–570 (RVNASWTW), 597–604 (MGFASIGY), 611–617 (YAGTEAR), 637–647 (LVGLFTGYKYN), 651–659 (LTVDLFGRV), and 689–697 (YGVGMNIAW). The region spanning 162-697 (PPTIEASSYY…NYGVGMNIAW (536 aa)) is the TBDR beta-barrel domain. Residues 680-700 (YYEPSPGRNYGVGMNIAWRFE) carry the TonB C-terminal box motif.

The protein belongs to the TonB-dependent receptor family.

The protein localises to the cell outer membrane. In terms of biological role, mediates the TonB-dependent high affinity transport across the outer membrane of pyrroloquinoline quinone (PQQ), a redox cofactor required for the activity of Gcd and Asd dehydrogenases. The uptake process is energised via the TonB-ExbBD complex. Not involved in the transport of an iron-containing substrate under laboratory conditions. This Escherichia coli (strain K12) protein is Pyrroloquinoline quinone transporter.